We begin with the raw amino-acid sequence, 238 residues long: CS1 fimbrial subunit B (238 aa).

An N-terminal signal peptide occupies residues methionine 1–alanine 17.

The protein localises to the fimbrium. Might function as a shuttle protein in the transport of fimbria through the periplasmic space or might function as an adhesin. The sequence is that of CS1 fimbrial subunit B (csoB) from Escherichia coli.